The sequence spans 220 residues: Cytidylate kinase (220 aa).

10-18 (GPASSGKST) contacts ATP.

This sequence belongs to the cytidylate kinase family. Type 1 subfamily.

It is found in the cytoplasm. It catalyses the reaction CMP + ATP = CDP + ADP. It carries out the reaction dCMP + ATP = dCDP + ADP. The chain is Cytidylate kinase from Lactococcus lactis subsp. cremoris (strain SK11).